Here is a 274-residue protein sequence, read N- to C-terminus: Large ribosomal subunit protein uL2 (274 aa).

The tract at residues 223 to 274 (VAMNPVDHPHGGGEGKTSGGRHPVSPWGVPTKGYKTRSNKRTDKFIVRRRAK) is disordered.

Belongs to the universal ribosomal protein uL2 family. As to quaternary structure, part of the 50S ribosomal subunit. Forms a bridge to the 30S subunit in the 70S ribosome.

Its function is as follows. One of the primary rRNA binding proteins. Required for association of the 30S and 50S subunits to form the 70S ribosome, for tRNA binding and peptide bond formation. It has been suggested to have peptidyltransferase activity; this is somewhat controversial. Makes several contacts with the 16S rRNA in the 70S ribosome. The protein is Large ribosomal subunit protein uL2 of Colwellia psychrerythraea (strain 34H / ATCC BAA-681) (Vibrio psychroerythus).